The primary structure comprises 440 residues: Xylose isomerase (440 aa).

Active-site residues include His101 and Asp104. Mg(2+) contacts are provided by Glu232, Glu268, His271, Asp296, Asp307, Asp309, and Asp339.

This sequence belongs to the xylose isomerase family. As to quaternary structure, homotetramer. It depends on Mg(2+) as a cofactor.

The protein localises to the cytoplasm. It carries out the reaction alpha-D-xylose = alpha-D-xylulofuranose. The polypeptide is Xylose isomerase (Salmonella dublin (strain CT_02021853)).